Reading from the N-terminus, the 220-residue chain is SAGA-associated factor 11 homolog (220 aa).

A disordered region spans residues 1-38 (MSTGTANSAVSSKSTNSTTSTSKVPVNEKSNNSQNANT). The segment at 126 to 147 (CTCPNCDRPVSAARFAPHLEKC) adopts an SGF11-type zinc-finger fold. 2 stretches are compositionally biased toward low complexity: residues 160 to 177 (RRLA…SSSS) and 204 to 220 (SQNS…GKTF). A disordered region spans residues 160–220 (RRLATKESNS…GSKKNNGKTF (61 aa)).

The protein belongs to the SGF11 family. As to quaternary structure, component of some SAGA transcription coactivator-HAT complexes. Within the SAGA complex, participates in a subcomplex of SAGA called the DUB module (deubiquitination module).

The protein localises to the nucleus. Component of the transcription regulatory histone acetylation (HAT) complex SAGA, a multiprotein complex that activates transcription by remodeling chromatin and mediating histone acetylation and deubiquitination. Within the SAGA complex, participates in a subcomplex that specifically deubiquitinates histone H2B. The SAGA complex is recruited to specific gene promoters by activators, where it is required for transcription. This chain is SAGA-associated factor 11 homolog, found in Musca domestica (House fly).